We begin with the raw amino-acid sequence, 184 residues long: Elongation factor P 1 (184 aa).

Belongs to the elongation factor P family.

The protein resides in the cytoplasm. It functions in the pathway protein biosynthesis; polypeptide chain elongation. Its function is as follows. Involved in peptide bond synthesis. Stimulates efficient translation and peptide-bond synthesis on native or reconstituted 70S ribosomes in vitro. Probably functions indirectly by altering the affinity of the ribosome for aminoacyl-tRNA, thus increasing their reactivity as acceptors for peptidyl transferase. This Protochlamydia amoebophila (strain UWE25) protein is Elongation factor P 1 (efp1).